A 645-amino-acid polypeptide reads, in one-letter code: MKRSFIFAPGMLALSISAISNAHAYNNLYVFGDSLSDGGNNGRYTVDGINGTESKLYNDFIAQQLGIELVNSKKGGTNYAAGGATAVADLNNKHNTQDQVMGYLASHSNRADHNGMYVHWIGGNDVDAALRNPADAQKIITESAMAASSQVHALLNAGAGLVIVPTVPDVGMTPKIMEFVLSKGGATSKDLAKIHAVVNGYPTIDKDTRLQVIHGVFKQIGSDVSGGDAKKAEETTKQLIDGYNELSSNASKLVDNYNQLEDMALSQENGNIVRVDVNALLHEVIANPLRYGFLNTIGYACAQGVNAGSCRSKDTGFDASKPFLFADDFHPTPEAHHIVSQYTVSVLNAPYRVMLLTNANNVPVKGALASLDGRLQQLRNVDNEQGKLGVFGGYSGNHSHTLTLGSDYQIMDNILLGGMISRYQDNSSPADNFHYDGRGYVFTAYGLWRYYDKGWISGDLHYLDMKYEDITRGIVLNDWLRKENASTSGHQWGGRITAGWDIPLTSAVTTSPIIQYAWDKSYVKGYRESGNNSTAMHFGEQRYDSQVGTLGWRLDTNFGYFNPYAEVRFNHQFGDKRYQIRSAINSTQTSFVSESQKQDTHWREYTIGMNAVITKDWGAFASISRNDGDVQNHTYSFSLGVNASF.

Positions 1 to 24 (MKRSFIFAPGMLALSISAISNAHA) are cleaved as a signal peptide. The Nucleophile role is filled by serine 34. Catalysis depends on residues aspartate 327 and histidine 330. An Autotransporter domain is found at 383 to 645 (NEQGKLGVFG…SFSLGVNASF (263 aa)).

Belongs to the 'GDSL' lipolytic enzyme family.

Its subcellular location is the secreted. The enzyme catalyses a triacylglycerol + H2O = a diacylglycerol + a fatty acid + H(+). This chain is Lipase 1 (lip-1), found in Photorhabdus luminescens (Xenorhabdus luminescens).